A 350-amino-acid polypeptide reads, in one-letter code: Biotin synthase (350 aa).

Residues 63–281 (GDIELATLLS…IAVARITMPK (219 aa)) enclose the Radical SAM core domain. The [4Fe-4S] cluster site is built by cysteine 78, cysteine 82, and cysteine 85. Residues cysteine 122, cysteine 153, cysteine 213, and arginine 285 each coordinate [2Fe-2S] cluster.

Belongs to the radical SAM superfamily. Biotin synthase family. In terms of assembly, homodimer. It depends on [4Fe-4S] cluster as a cofactor. [2Fe-2S] cluster serves as cofactor.

The enzyme catalyses (4R,5S)-dethiobiotin + (sulfur carrier)-SH + 2 reduced [2Fe-2S]-[ferredoxin] + 2 S-adenosyl-L-methionine = (sulfur carrier)-H + biotin + 2 5'-deoxyadenosine + 2 L-methionine + 2 oxidized [2Fe-2S]-[ferredoxin]. It functions in the pathway cofactor biosynthesis; biotin biosynthesis; biotin from 7,8-diaminononanoate: step 2/2. Functionally, catalyzes the conversion of dethiobiotin (DTB) to biotin by the insertion of a sulfur atom into dethiobiotin via a radical-based mechanism. The sequence is that of Biotin synthase from Acidovorax ebreus (strain TPSY) (Diaphorobacter sp. (strain TPSY)).